Here is a 255-residue protein sequence, read N- to C-terminus: MLTKRIIACLDVKDGRVVKGTQFKNHKDMGDIIELARYYSQNGIDELVFYDIAASARKERISREWVSEVAKNINIPFCVAGGIKSEEDAAELLANGADKISINSPALNDPSLITRLAKSFGVQCVVVGIDSFKDENGNLKVFQYTGDEKTSKHSGKSTLEWVKEVQDLGAGEIVLNMMNQDGVKNGYDLEQLKAVYKICKVPLIASGGAGKMEHFLEAFKLGIDGALAASVFHQKLIDIKELKIYLKNQGLSIRI.

Residues Asp11 and Asp130 contribute to the active site.

This sequence belongs to the HisA/HisF family. In terms of assembly, heterodimer of HisH and HisF.

The protein resides in the cytoplasm. It carries out the reaction 5-[(5-phospho-1-deoxy-D-ribulos-1-ylimino)methylamino]-1-(5-phospho-beta-D-ribosyl)imidazole-4-carboxamide + L-glutamine = D-erythro-1-(imidazol-4-yl)glycerol 3-phosphate + 5-amino-1-(5-phospho-beta-D-ribosyl)imidazole-4-carboxamide + L-glutamate + H(+). It participates in amino-acid biosynthesis; L-histidine biosynthesis; L-histidine from 5-phospho-alpha-D-ribose 1-diphosphate: step 5/9. IGPS catalyzes the conversion of PRFAR and glutamine to IGP, AICAR and glutamate. The HisF subunit catalyzes the cyclization activity that produces IGP and AICAR from PRFAR using the ammonia provided by the HisH subunit. This Campylobacter jejuni subsp. jejuni serotype O:6 (strain 81116 / NCTC 11828) protein is Imidazole glycerol phosphate synthase subunit HisF.